Reading from the N-terminus, the 648-residue chain is FAD-binding monooxygenase trt3 (648 aa).

FAD-binding positions include 118 to 121 (TWYW), 130 to 131 (DI), and tyrosine 136. NADP(+) is bound at residue 128 to 130 (MCD). NADP(+)-binding positions include 274 to 280 (TGSTAVQ) and 297 to 298 (RT).

This sequence belongs to the FAD-binding monooxygenase family. The cofactor is FAD.

It participates in secondary metabolite biosynthesis; terpenoid biosynthesis. Its function is as follows. FAD-binding monooxygenase; part of the gene cluster that mediates the biosynthesis of terretonin, a fungal meroterpenoid that acts as a mycotoxin. The first step of the pathway is the synthesis of 3,5-dimethylorsellinic acid (DMOA) by the polyketide synthase trt4. DMOA is then prenylated into farnesyl-DMOA by the polyprenyl transferase trt2. Methylation by the methyltransferase trt5 then leads to farnesyl-DMOA methyl ester which is further subject to epoxidation by the FAD-dependent monooxygenase trt8 to yield epoxyfarnesyl-DMOA methyl ester. Cyclization of epoxyfarnesyl-DMOA methyl ester by the terpene cyclase trt1 leads to a tetracycle intermediate which is in turn converted to preterretonin. Dehydrogenase trt9 comes next to transform preterretonin to preterrenoid. The FAD-dependent monooxygenase trt3 is then required for the C-hydroxylation at C16 of preterrenoid to yield terrenoid. The cytochrome P450 trt6 catalyzes three successive oxidations to transform terrenoid into an unstable intermediate, which then undergoes the D-ring expansion and unusual rearrangement of the methoxy group to afford the core skeleton of terretonin. Trt14 catalyzes the D-ring expansion of terretonin involving intramolecular methoxy rearrangement as well as the hydrolysis of the expanded D-ring and the methyl ester moiety. Finally, the nonheme iron-dependent dioxygenase trt7 accomplishes the last two oxidation reactions steps to complete the biosynthesis of terretonin. Terretonin C is produced via spontaneous decarboxylation of the terretonin precursor. Another shunt product of the terretonin biosynthesis is dihydrofarnesyl-DMOA, derived from epoxyfarnesyl-DMOA through hydrolysis of the epoxide. This chain is FAD-binding monooxygenase trt3, found in Aspergillus terreus (strain NIH 2624 / FGSC A1156).